A 101-amino-acid polypeptide reads, in one-letter code: Small ribosomal subunit protein uS14 (101 aa).

Basic and acidic residues predominate over residues 1-11 (MAKKSSVEKNN). A disordered region spans residues 1-22 (MAKKSSVEKNNRRQRMVKNAAA). The segment covering 12–22 (RRQRMVKNAAA) has biased composition (basic residues).

Belongs to the universal ribosomal protein uS14 family. Part of the 30S ribosomal subunit. Contacts proteins S3 and S10.

Its function is as follows. Binds 16S rRNA, required for the assembly of 30S particles and may also be responsible for determining the conformation of the 16S rRNA at the A site. This is Small ribosomal subunit protein uS14 from Afipia carboxidovorans (strain ATCC 49405 / DSM 1227 / KCTC 32145 / OM5) (Oligotropha carboxidovorans).